Here is a 622-residue protein sequence, read N- to C-terminus: Auxin efflux carrier component 1 (622 aa).

Residues 1-6 lie on the Extracellular side of the membrane; the sequence is MITAAD. Residues 7-27 traverse the membrane as a helical segment; sequence FYHVMTAMVPLYVAMILAYGS. The Cytoplasmic segment spans residues 28–44; the sequence is VKWWKIFTPDQCSGINR. The chain crosses the membrane as a helical span at residues 45 to 65; it reads FVALFAVPLLSFHFIAANNPY. Val51 serves as a coordination point for (indol-3-yl)acetate. The Extracellular portion of the chain corresponds to 66-70; the sequence is AMNLR. A helical transmembrane segment spans residues 71-91; that stretch reads FLAADSLQKVIVLSLLFLWCK. Residues 92-100 lie on the Cytoplasmic side of the membrane; sequence LSRNGSLDW. Residues 101-121 form a helical membrane-spanning segment; the sequence is TITLFSLSTLPNTLVMGIPLL. (indol-3-yl)acetate contacts are provided by Asn112 and Leu114. The Extracellular segment spans residues 122-131; the sequence is KGMYGNFSGD. N-linked (GlcNAc...) asparagine glycosylation is present at Asn127. The chain crosses the membrane as a helical span at residues 132–152; it reads LMVQIVVLQCIIWYTLMLFLF. Tyr145 lines the (indol-3-yl)acetate pocket. The Cytoplasmic portion of the chain corresponds to 153–482; the sequence is EYRGAKLLIS…LIRNPNSYSS (330 aa). A phosphoserine mark is found at Ser209, Ser212, Ser221, and Ser225. Positions 213-233 are disordered; sequence RSDIYSRRSQGLSATPRPSNL. Thr227 bears the Phosphothreonine mark. Position 231 is a phosphoserine (Ser231). Thr248 carries the post-translational modification Phosphothreonine. Phosphoserine occurs at positions 252, 253, and 271. The disordered stretch occupies residues 268 to 362; that stretch reads GRNSNFGPGE…PVVGGKRQDG (95 aa). Thr286 carries the phosphothreonine modification. A Phosphoserine modification is found at Ser290. Over residues 298 to 311 the composition is skewed to low complexity; the sequence is PAKPTAAGTAAGAG. The residue at position 302 (Thr302) is a Phosphothreonine. 3 positions are modified to phosphoserine: Ser317, Ser320, and Ser337. Thr340 is modified (phosphothreonine). Ser374, Ser377, Ser408, Ser414, Ser426, Ser434, and Ser446 each carry phosphoserine. Residues 483–503 traverse the membrane as a helical segment; it reads LFGITWSLISFKWNIEMPALI. The Extracellular portion of the chain corresponds to 504–506; that stretch reads AKS. Residues 507–527 traverse the membrane as a helical segment; sequence ISILSDAGLGMAMFSLGLFMA. Over 528–541 the chain is Cytoplasmic; the sequence is LNPRIIACGNRRAA. Residues 542-562 form a helical membrane-spanning segment; sequence FAAAMRFVVGPAVMLVASYAV. The Extracellular segment spans residues 563–566; sequence GLRG. The chain crosses the membrane as a helical span at residues 567–587; it reads VLLHVAIIQAALPQGIVPFVF. Positions 582 and 583 each coordinate (indol-3-yl)acetate. Over 588-601 the chain is Cytoplasmic; the sequence is AKEYNVHPDILSTA. A helical transmembrane segment spans residues 602–622; it reads VIFGMLIALPITLLYYILLGL.

This sequence belongs to the auxin efflux carrier (TC 2.A.69.1) family. In terms of assembly, homodimer. Interacts with TOPP4. Interacts with FYPP1 and FYPP3. Component of a complex made of PINs (e.g. PIN1 and PIN2), MAB4/MELs (e.g. NPY1/MAB4 and NPY5/MEL1) and AGC kinases (e.g. D6PK and PID) at the plasma membrane. Binds directly to NPY5/MEL1. As to expression, expressed at the basal side of elongated parenchymatous xylem cells.

It localises to the cell membrane. Auxin efflux carrier activity is competitively inhibited by naptalamate (N-1-naphthylphthalamic acid, NPA) but activated by D6PK-mediated phosphorylation. Functionally, acts as a component of the auxin efflux carrier; this activity is enhanced when activated by D6PK-mediated phosphorylation. Binds auxins including indole-3-acetic acid (IAA), indole-3-butyric acid (IBA), indole-3-propionic acid (IPA) and 4-chloroindole-3-acetic acid (4-Cl-IAA). Seems to be involved in the basipetal auxin transport. Mediates the formation of auxin gradient which is required to ensure correct organogenesis. Coordinated polar localization of PIN1 is directly regulated by the vesicle trafficking process and apical-basal PIN1 polarity also depends on the phosphorylation of conserved serine residues by PID kinase. The ARF-GEF protein GNOM is required for the correct recycling of PIN1 between the plasma membrane and endosomal compartments. Recrutes NPY proteins (e.g. NPY1/MAB4 and NPY5/MEL1) to the plasma membrane in a polar basal localization in root epidermis; this activity is optimized by AGC kinases-mediated (e.g. D6PK and PID) phosphorylation that limits their lateral diffusion-based escape. In Arabidopsis thaliana (Mouse-ear cress), this protein is Auxin efflux carrier component 1.